Here is a 660-residue protein sequence, read N- to C-terminus: DNA mismatch repair protein MutL (660 aa).

A disordered region spans residues 414 to 433; it reads SSVKHASRPQNTFTETDHPN.

The protein belongs to the DNA mismatch repair MutL/HexB family.

In terms of biological role, this protein is involved in the repair of mismatches in DNA. It is required for dam-dependent methyl-directed DNA mismatch repair. May act as a 'molecular matchmaker', a protein that promotes the formation of a stable complex between two or more DNA-binding proteins in an ATP-dependent manner without itself being part of a final effector complex. The sequence is that of DNA mismatch repair protein MutL from Streptococcus pyogenes serotype M5 (strain Manfredo).